The chain runs to 627 residues: MQRVLNKIISKDTINTMGKVAISKKVEKLRTFMKDQSLSAYIVPSEDAHQSEYICVKDKRREYISGFSGSAGCVVITLDNQLLWTDGRYWLQAEKELESNWKIMKDRVVGEPTIQDWLLSNLNKENKVGIDSRLISKGYYDSMKLVLKEKSIDIKFDEDGENLIDKVRESFKDEEEIPEYPKNSIFFLEDKFTGKQSNEKLKEIREEMKKQSADLMVVSALDEIAWLLNLRGSDISFNPVFLSYVVVEHEKVTLFVDESKLNDKTKSQLPSGIAISPYSSVFEYLRNSDKQGKKIWIDPRSSVALYNCVSISNLLEKINPILLSKAIKNETEIQGMKNAHIRDAVALIQFLAWMEEEIVEKSDETSHTEYSVCEKLEGFRRQQTDFVSLSFDTISSINANGAIIHYKPDETTSATIVKGMYLVDSGAQYLDGTTDVTRTLHYGKPTQHEIDCYTRVLRGHVGLSLLKFPNRVNGRDIDCVARTHLWSVGLDYAHGTGHGVGSFLNVHEGPQGISYRAIANPTNLQAGMTLTNEPGYYESGNFGIRIENVMIVAPVTTQFNNGKFIGFDNITLVPYERKLINLEMLTKDEINFINDYYKEIGEKILPLIEKTNNQKSINWLKNQIKPL.

A peptide contacts are provided by Arg-88 and His-405. Positions 424, 435, and 498 each coordinate Mn(2+). A peptide contacts are provided by His-498, His-507, and Glu-533. Residues Glu-533 and Glu-547 each coordinate Mn(2+).

Belongs to the peptidase M24B family. Homodimer. The cofactor is Mn(2+).

The protein localises to the cytoplasm. Its subcellular location is the cytosol. It carries out the reaction Release of any N-terminal amino acid, including proline, that is linked to proline, even from a dipeptide or tripeptide.. Functionally, metalloaminopeptidase that catalyzes the removal of a penultimate prolyl residue from the N-termini of peptides, such as Arg-Pro-Pro. The protein is Xaa-Pro aminopeptidase 1 (xpnpep1) of Dictyostelium discoideum (Social amoeba).